The chain runs to 394 residues: Aspergillopepsin-1 (394 aa).

The first 20 residues, 1–20 (MVVFSKVTAAVFGLATIASA), serve as a signal peptide directing secretion. Positions 21–69 (APAPPTRKGFTVQQQARPAQKKQVNLPAMYAHALTKFGGSVPESVKVAA) are cleaved as a propeptide — activation peptide. The region spanning 85-391 (YLTPVNVGGT…DSEGPRLGFA (307 aa)) is the Peptidase A1 domain. Residues Asp-101 and Asp-283 contribute to the active site. Cys-319 and Cys-354 are joined by a disulfide.

The protein belongs to the peptidase A1 family. As to quaternary structure, monomer.

The protein resides in the secreted. The catalysed reaction is Hydrolysis of proteins with broad specificity. Generally favors hydrophobic residues in P1 and P1', but also accepts Lys in P1, which leads to activation of trypsinogen. Does not clot milk.. Functionally, secreted aspartic endopeptidase that allows assimilation of proteinaceous substrates. The scissile peptide bond is attacked by a nucleophilic water molecule activated by two aspartic residues in the active site. Shows a broad primary substrate specificity. Favors hydrophobic residues at the P1 and P1' positions, but also accepts a lysine residue in the P1 position, leading to the activation of trypsinogen and chymotrypsinogen A. This is Aspergillopepsin-1 (pepA) from Aspergillus clavatus (strain ATCC 1007 / CBS 513.65 / DSM 816 / NCTC 3887 / NRRL 1 / QM 1276 / 107).